The following is a 123-amino-acid chain: MAQLPSAQMPAPRTQPDLILVHPVLALSGRAPSILCSVPWDACELLATAMWWKTRILWGVFLISRTRPPAPMQILILTLDPSEGEVCCKKRKPGQTGRNRVRMTTATCKPGGEASGETSPGTP.

This is an uncharacterized protein from Homo sapiens (Human).